We begin with the raw amino-acid sequence, 69 residues long: Sec-independent protein translocase protein TatA (69 aa).

Residues 1 to 21 (MFGKLGMPELVLIFAVALVIF) form a helical membrane-spanning segment.

It belongs to the TatA/E family. In terms of assembly, forms a complex with TatC.

The protein localises to the cell membrane. Functionally, part of the twin-arginine translocation (Tat) system that transports large folded proteins containing a characteristic twin-arginine motif in their signal peptide across membranes. TatA could form the protein-conducting channel of the Tat system. The protein is Sec-independent protein translocase protein TatA of Alkaliphilus metalliredigens (strain QYMF).